Reading from the N-terminus, the 284-residue chain is 4-hydroxy-3-methylbut-2-enyl diphosphate reductase (284 aa).

Cys12 lines the [4Fe-4S] cluster pocket. Residues His40 and His76 each contribute to the (2E)-4-hydroxy-3-methylbut-2-enyl diphosphate site. The dimethylallyl diphosphate site is built by His40 and His76. The isopentenyl diphosphate site is built by His40 and His76. Cys98 serves as a coordination point for [4Fe-4S] cluster. His126 lines the (2E)-4-hydroxy-3-methylbut-2-enyl diphosphate pocket. His126 provides a ligand contact to dimethylallyl diphosphate. His126 contributes to the isopentenyl diphosphate binding site. The active-site Proton donor is Glu128. A (2E)-4-hydroxy-3-methylbut-2-enyl diphosphate-binding site is contributed by Thr161. Cys191 provides a ligand contact to [4Fe-4S] cluster. (2E)-4-hydroxy-3-methylbut-2-enyl diphosphate contacts are provided by Ser219, Ser220, Asn221, and Ser263. Dimethylallyl diphosphate contacts are provided by Ser219, Ser220, Asn221, and Ser263. 4 residues coordinate isopentenyl diphosphate: Ser219, Ser220, Asn221, and Ser263.

It belongs to the IspH family. [4Fe-4S] cluster is required as a cofactor.

It catalyses the reaction isopentenyl diphosphate + 2 oxidized [2Fe-2S]-[ferredoxin] + H2O = (2E)-4-hydroxy-3-methylbut-2-enyl diphosphate + 2 reduced [2Fe-2S]-[ferredoxin] + 2 H(+). The catalysed reaction is dimethylallyl diphosphate + 2 oxidized [2Fe-2S]-[ferredoxin] + H2O = (2E)-4-hydroxy-3-methylbut-2-enyl diphosphate + 2 reduced [2Fe-2S]-[ferredoxin] + 2 H(+). The protein operates within isoprenoid biosynthesis; dimethylallyl diphosphate biosynthesis; dimethylallyl diphosphate from (2E)-4-hydroxy-3-methylbutenyl diphosphate: step 1/1. Its pathway is isoprenoid biosynthesis; isopentenyl diphosphate biosynthesis via DXP pathway; isopentenyl diphosphate from 1-deoxy-D-xylulose 5-phosphate: step 6/6. In terms of biological role, catalyzes the conversion of 1-hydroxy-2-methyl-2-(E)-butenyl 4-diphosphate (HMBPP) into a mixture of isopentenyl diphosphate (IPP) and dimethylallyl diphosphate (DMAPP). Acts in the terminal step of the DOXP/MEP pathway for isoprenoid precursor biosynthesis. The polypeptide is 4-hydroxy-3-methylbut-2-enyl diphosphate reductase (Petrotoga mobilis (strain DSM 10674 / SJ95)).